Here is a 363-residue protein sequence, read N- to C-terminus: DNA replication and repair protein RecF (363 aa).

An ATP-binding site is contributed by 31-38; the sequence is GANSSGKT.

The protein belongs to the RecF family.

The protein localises to the cytoplasm. In terms of biological role, the RecF protein is involved in DNA metabolism; it is required for DNA replication and normal SOS inducibility. RecF binds preferentially to single-stranded, linear DNA. It also seems to bind ATP. The polypeptide is DNA replication and repair protein RecF (Nitrosococcus oceani (strain ATCC 19707 / BCRC 17464 / JCM 30415 / NCIMB 11848 / C-107)).